A 43-amino-acid chain; its full sequence is Myotoxin-1 (43 aa).

3 disulfides stabilise this stretch: cysteine 4–cysteine 36, cysteine 11–cysteine 30, and cysteine 18–cysteine 37.

This sequence belongs to the crotamine-myotoxin family. In terms of assembly, monomer. Expressed by the venom gland.

It localises to the secreted. Cationic peptide that possesses multiple functions. It acts as a cell-penetrating peptide (CPP), and as a potent voltage-gated potassium channel (Kv) inhibitor. It exhibits antimicrobial activities, hind limb paralysis, and severe muscle necrosis by a non-enzymatic mechanism. The protein is Myotoxin-1 of Crotalus concolor (Midget faded rattlesnake).